The sequence spans 253 residues: Trypsin beta (253 aa).

The N-terminal stretch at 1-22 (MLKFVILLSAVACALGGTIPEG) is a signal peptide. Residues 23 to 30 (LLPQLDGR) constitute a propeptide, activation peptide. Positions 31–253 (IVGGTATTIS…DLRSWVINNA (223 aa)) constitute a Peptidase S1 domain. Cys56 and Cys72 are joined by a disulfide. Residues His71 and Asp116 each act as charge relay system in the active site. Cystine bridges form between Cys180/Cys197 and Cys206/Cys230. Catalysis depends on Ser210, which acts as the Charge relay system.

Belongs to the peptidase S1 family.

It localises to the secreted. Its subcellular location is the extracellular space. It catalyses the reaction Preferential cleavage: Arg-|-Xaa, Lys-|-Xaa.. In Drosophila erecta (Fruit fly), this protein is Trypsin beta (betaTry).